The sequence spans 451 residues: Sex peptide receptor-related protein 2 (451 aa).

Topologically, residues 1–63 (MNYEVYCGNA…DNLEIVVYGQ (63 aa)) are extracellular. Asn-15 carries an N-linked (GlcNAc...) asparagine glycan. Residues 64–84 (IFPILVLFAVFANAAVALVLS) form a helical membrane-spanning segment. Over 85-97 (KKHMITPTNVVLK) the chain is Cytoplasmic. Residues 98 to 118 (YMAIAELLVGLVPLPWTLFFF) form a helical membrane-spanning segment. Topologically, residues 119-140 (SMGNIKETHRLELWWCYLQKYS) are extracellular. Cys-134 and Cys-225 are joined by a disulfide. A helical transmembrane segment spans residues 141–161 (MDAFPPVFHMIAMWLTVLLAA). Over 162–183 (QRYVSISHPLHSRSACNVKNVR) the chain is Cytoplasmic. A helical transmembrane segment spans residues 184–204 (LATMIITVTSFLCGLPKSFDY). Residues 205–251 (EYETVHGWIYSHGNWTYASSCVMMPTAILTNMGQTVYFNIYFWTRAL) are Extracellular-facing. N-linked (GlcNAc...) asparagine glycosylation is present at Asn-218. A helical membrane pass occupies residues 252 to 272 (GFIILPSFLLVLLNGLLIKGI). At 273 to 301 (RRAQRRKLRLLREKRSEEAARQRDSNSTS) the chain is on the cytoplasmic side. A helical transmembrane segment spans residues 302 to 322 (LMLVAIVSIFLIVNLPQAIFM). Over 323 to 334 (GLLCVCETFTIK) the chain is Extracellular. A helical membrane pass occupies residues 335–355 (IPILEGTFPAVFLIASNMIVI). At 356–451 (ATYPINFGIY…TQFTTMDRSD (96 aa)) the chain is on the cytoplasmic side.

Belongs to the G-protein coupled receptor 1 family. Expressed in head neurons including the ASE sensory neurons and the ASI and AWB chemosensory neurons, the midbody neurons SDQ, and motor neurons in the tail.

The protein resides in the cell membrane. Its function is as follows. G-protein coupled receptor for the neuropeptide like protein nlp-38. Plays a role in several types of aversive gustatory associative learning including gustatory plasticity and salt avoidance learning. Its role in salt avoidance learning may be through activation of the transcription factor crh-1/CREB and de novo transcription and translation, which in turn promotes the formation of long-term memory. The protein is Sex peptide receptor-related protein 2 of Caenorhabditis elegans.